Here is a 401-residue protein sequence, read N- to C-terminus: Nodal homolog 3-A (401 aa).

A signal peptide spans 1-18 (MAFLNLFFCLVFISPLMA). Positions 19 to 274 (MPPVLQGRKS…KVNGFRRLRR (256 aa)) are excised as a propeptide. 4 N-linked (GlcNAc...) asparagine glycosylation sites follow: Asn168, Asn337, Asn341, and Asn344. 2 cysteine pairs are disulfide-bonded: Cys299–Cys365 and Cys328–Cys396.

Belongs to the TGF-beta family. As to quaternary structure, monomer. The propeptide region interacts with bmp4 in a non-covalent manner. As to expression, expressed in the epithelial layer of the Spemann organizer during gastrulation.

The protein resides in the secreted. Its function is as follows. Exhibits mesoderm-dorsalizing activity and neural-inducing activity, but lacks mesoderm-inducing activity. Regulates the expression of specific mesodermal and neural genes. Induces convergent extension movements at the embryonic midline by activating the fgf signaling pathway to induce t/bra expression in the organizer region. Acts with wnt11 to induce Spemann organizer cells and induce axis formation. The unprocessed protein antagonizes bmp-signaling. The sequence is that of Nodal homolog 3-A (nodal3-a) from Xenopus laevis (African clawed frog).